The following is a 179-amino-acid chain: MSVLAEQYKEEIVPKLMDKFDYENIMAVPRVEKVVVNVGMGELKEDPKLIDVVVNDIASITGQKPVITRAKKSVANFKIREGMPIGAKVTLRGETMYEFLYKLVNVTLPRIRDFRGVSPKSFDGRGNYNIGIREHIVFPEIEIDKVDKVYGLEITIVTSAETDEEAYELLKLMGMPFNQ.

The protein belongs to the universal ribosomal protein uL5 family. As to quaternary structure, part of the 50S ribosomal subunit; part of the 5S rRNA/L5/L18/L25 subcomplex. Contacts the 5S rRNA and the P site tRNA. Forms a bridge to the 30S subunit in the 70S ribosome.

Its function is as follows. This is one of the proteins that bind and probably mediate the attachment of the 5S RNA into the large ribosomal subunit, where it forms part of the central protuberance. In the 70S ribosome it contacts protein S13 of the 30S subunit (bridge B1b), connecting the 2 subunits; this bridge is implicated in subunit movement. Contacts the P site tRNA; the 5S rRNA and some of its associated proteins might help stabilize positioning of ribosome-bound tRNAs. The sequence is that of Large ribosomal subunit protein uL5 from Halothermothrix orenii (strain H 168 / OCM 544 / DSM 9562).